A 675-amino-acid polypeptide reads, in one-letter code: L-type lectin-domain containing receptor kinase IX.2 (675 aa).

An N-terminal signal peptide occupies residues 1–35; sequence MLYFIFCQNLSSSSSMSNSILFLSLFLFLPFVVDS. N-linked (GlcNAc...) asparagine glycans are attached at residues Asn-9, Asn-39, Asn-110, Asn-146, Asn-179, Asn-186, Asn-191, and Asn-212. The interval 36–269 is legume-lectin like; it reads LYFNFTSFRQ…EEHRLLSWEL (234 aa). Residues 36 to 281 are Extracellular-facing; the sequence is LYFNFTSFRQ…SLDSDKADSR (246 aa). The chain crosses the membrane as a helical span at residues 282–302; the sequence is IGLVIGISASGFVFLTFMVIT. At 303-675 the chain is on the cytoplasmic side; it reads TVVVWSRKQR…VTFSGIEYGR (373 aa). The Protein kinase domain occupies 350-631; sequence FSSHRKLGEG…KQGIQVMNFE (282 aa). ATP is bound by residues 356 to 364 and Lys-379; that span reads LGEGGFGAV. Asp-475 functions as the Proton acceptor in the catalytic mechanism.

In the C-terminal section; belongs to the protein kinase superfamily. Ser/Thr protein kinase family. The protein in the N-terminal section; belongs to the leguminous lectin family. In terms of assembly, interacts with ABCG40.

The protein resides in the cell membrane. It carries out the reaction L-seryl-[protein] + ATP = O-phospho-L-seryl-[protein] + ADP + H(+). The catalysed reaction is L-threonyl-[protein] + ATP = O-phospho-L-threonyl-[protein] + ADP + H(+). Promotes hydrogen peroxide H(2)O(2) production and cell death. Functionally, involved in resistance response to the pathogenic oomycetes Phytophthora infestans and Phytophthora capsici. This Arabidopsis thaliana (Mouse-ear cress) protein is L-type lectin-domain containing receptor kinase IX.2.